The chain runs to 130 residues: Small ribosomal subunit protein uS8 (130 aa).

Belongs to the universal ribosomal protein uS8 family.

The chain is Small ribosomal subunit protein uS8 (RPS22) from Kluyveromyces marxianus (Yeast).